The primary structure comprises 181 residues: Protein Syd (181 aa).

This sequence belongs to the Syd family.

Its subcellular location is the cell inner membrane. In terms of biological role, interacts with the SecY protein in vivo. May bind preferentially to an uncomplexed state of SecY, thus functioning either as a chelating agent for excess SecY in the cell or as a regulatory factor that negatively controls the translocase function. The protein is Protein Syd of Escherichia fergusonii (strain ATCC 35469 / DSM 13698 / CCUG 18766 / IAM 14443 / JCM 21226 / LMG 7866 / NBRC 102419 / NCTC 12128 / CDC 0568-73).